The following is a 431-amino-acid chain: Ammonium transporter 3 (431 aa).

The Extracellular segment spans residues methionine 1–serine 27. The chain crosses the membrane as a helical span at residues tryptophan 28 to alanine 48. At glycine 49–asparagine 63 the chain is on the cytoplasmic side. The helical transmembrane segment at leucine 64 to glycine 84 threads the bilayer. Topologically, residues lysine 85–tyrosine 102 are extracellular. Residues threonine 103 to alanine 125 traverse the membrane as a helical segment. The Cytoplasmic portion of the chain corresponds to methionine 126–cysteine 134. A helical transmembrane segment spans residues tyrosine 135–tryptophan 155. Topologically, residues serine 156–tryptophan 160 are extracellular. Residues leucine 161–isoleucine 181 traverse the membrane as a helical segment. Over threonine 182–serine 211 the chain is Cytoplasmic. Residues valine 212–glycine 232 form a helical membrane-spanning segment. Topologically, residues alanine 233–serine 249 are extracellular. Residues valine 250 to phenylalanine 270 form a helical membrane-spanning segment. The Cytoplasmic portion of the chain corresponds to asparagine 271–tryptophan 300. Residues alanine 301–leucine 321 traverse the membrane as a helical segment. Residues asparagine 322–threonine 333 lie on the Extracellular side of the membrane. A helical membrane pass occupies residues alanine 334–glycine 354. At arginine 355–arginine 357 the chain is on the cytoplasmic side. The chain crosses the membrane as a helical span at residues asparagine 358–valine 378. A topological domain (extracellular) is located at residue glutamine 379. Residues leucine 380–threonine 400 form a helical membrane-spanning segment. Topologically, residues methionine 401–aspartate 431 are cytoplasmic.

It belongs to the ammonia transporter channel (TC 1.A.11.2) family.

Its subcellular location is the cell membrane. The protein localises to the endosome membrane. The protein resides in the cytoplasmic vesicle. It localises to the phagosome membrane. In terms of biological role, ammonium transporter that mediates the import of ammonium in prespore cells. Controls ammonium homeostasis during growth and development. Ammonium has been shown to function as a morphogen at multiple steps during the development. May function as an ammonia sensor that relays information concerning ammonia concentrations to the signaling pathway involved in the slug versus culmination choice and regulates prestalk gene expression. The sequence is that of Ammonium transporter 3 (amtC) from Dictyostelium discoideum (Social amoeba).